A 543-amino-acid chain; its full sequence is CTP synthase (543 aa).

Positions 1 to 267 (MKQTKYIFVT…LSPIAEILDL (267 aa)) are amidoligase domain. Ser15 is a binding site for CTP. Ser15 lines the UTP pocket. ATP contacts are provided by residues 16-21 (SLGKGI) and Asp73. Positions 73 and 141 each coordinate Mg(2+). CTP contacts are provided by residues 148–150 (DIE), 188–193 (KTKPTQ), and Lys224. UTP contacts are provided by residues 188–193 (KTKPTQ) and Lys224. Residues 292 to 543 (KIAFVGKYVD…IKAAINYEDN (252 aa)) form the Glutamine amidotransferase type-1 domain. Gly354 is a binding site for L-glutamine. Cys381 serves as the catalytic Nucleophile; for glutamine hydrolysis. L-glutamine-binding positions include 382 to 385 (LGMQ), Glu405, and Arg473. Active-site residues include His516 and Glu518.

Belongs to the CTP synthase family. In terms of assembly, homotetramer.

It catalyses the reaction UTP + L-glutamine + ATP + H2O = CTP + L-glutamate + ADP + phosphate + 2 H(+). The enzyme catalyses L-glutamine + H2O = L-glutamate + NH4(+). The catalysed reaction is UTP + NH4(+) + ATP = CTP + ADP + phosphate + 2 H(+). It participates in pyrimidine metabolism; CTP biosynthesis via de novo pathway; CTP from UDP: step 2/2. Its activity is regulated as follows. Allosterically activated by GTP, when glutamine is the substrate; GTP has no effect on the reaction when ammonia is the substrate. The allosteric effector GTP functions by stabilizing the protein conformation that binds the tetrahedral intermediate(s) formed during glutamine hydrolysis. Inhibited by the product CTP, via allosteric rather than competitive inhibition. Catalyzes the ATP-dependent amination of UTP to CTP with either L-glutamine or ammonia as the source of nitrogen. Regulates intracellular CTP levels through interactions with the four ribonucleotide triphosphates. This chain is CTP synthase, found in Campylobacter jejuni subsp. jejuni serotype O:6 (strain 81116 / NCTC 11828).